We begin with the raw amino-acid sequence, 818 residues long: Glycerol-3-phosphate acyltransferase (818 aa).

The HXXXXD motif signature appears at 305 to 310; that stretch reads CHRSHM.

The protein belongs to the GPAT/DAPAT family.

The protein localises to the cell inner membrane. It carries out the reaction sn-glycerol 3-phosphate + an acyl-CoA = a 1-acyl-sn-glycero-3-phosphate + CoA. It functions in the pathway phospholipid metabolism; CDP-diacylglycerol biosynthesis; CDP-diacylglycerol from sn-glycerol 3-phosphate: step 1/3. The sequence is that of Glycerol-3-phosphate acyltransferase from Edwardsiella ictaluri (strain 93-146).